The sequence spans 149 residues: UPF0260 protein PSPTO_3918 (149 aa).

It belongs to the UPF0260 family.

The sequence is that of UPF0260 protein PSPTO_3918 from Pseudomonas syringae pv. tomato (strain ATCC BAA-871 / DC3000).